A 530-amino-acid polypeptide reads, in one-letter code: Glucose-6-phosphate isomerase (530 aa).

Catalysis depends on Glu356, which acts as the Proton donor. Active-site residues include His387 and Lys502.

This sequence belongs to the GPI family.

It localises to the cytoplasm. It carries out the reaction alpha-D-glucose 6-phosphate = beta-D-fructose 6-phosphate. It functions in the pathway carbohydrate biosynthesis; gluconeogenesis. It participates in carbohydrate degradation; glycolysis; D-glyceraldehyde 3-phosphate and glycerone phosphate from D-glucose: step 2/4. Its function is as follows. Catalyzes the reversible isomerization of glucose-6-phosphate to fructose-6-phosphate. In Borrelia garinii subsp. bavariensis (strain ATCC BAA-2496 / DSM 23469 / PBi) (Borreliella bavariensis), this protein is Glucose-6-phosphate isomerase.